A 101-amino-acid chain; its full sequence is Small ribosomal subunit protein uS14 (101 aa).

It belongs to the universal ribosomal protein uS14 family. As to quaternary structure, part of the 30S ribosomal subunit. Contacts proteins S3 and S10.

In terms of biological role, binds 16S rRNA, required for the assembly of 30S particles and may also be responsible for determining the conformation of the 16S rRNA at the A site. This Brucella anthropi (strain ATCC 49188 / DSM 6882 / CCUG 24695 / JCM 21032 / LMG 3331 / NBRC 15819 / NCTC 12168 / Alc 37) (Ochrobactrum anthropi) protein is Small ribosomal subunit protein uS14.